A 446-amino-acid polypeptide reads, in one-letter code: Gamma-glutamyl phosphate reductase (446 aa).

It belongs to the gamma-glutamyl phosphate reductase family.

The protein localises to the cytoplasm. The enzyme catalyses L-glutamate 5-semialdehyde + phosphate + NADP(+) = L-glutamyl 5-phosphate + NADPH + H(+). It functions in the pathway amino-acid biosynthesis; L-proline biosynthesis; L-glutamate 5-semialdehyde from L-glutamate: step 2/2. Functionally, catalyzes the NADPH-dependent reduction of L-glutamate 5-phosphate into L-glutamate 5-semialdehyde and phosphate. The product spontaneously undergoes cyclization to form 1-pyrroline-5-carboxylate. In Sulfurihydrogenibium sp. (strain YO3AOP1), this protein is Gamma-glutamyl phosphate reductase.